Consider the following 366-residue polypeptide: Actin-like protein 8 (366 aa).

Belongs to the actin family. In terms of tissue distribution, strongly expressed in testis and pancreas. Weak expression in placenta.

The protein localises to the cytoplasm. It localises to the cytoskeleton. This Homo sapiens (Human) protein is Actin-like protein 8 (ACTL8).